The primary structure comprises 406 residues: Tryptophan synthase beta chain (406 aa).

N6-(pyridoxal phosphate)lysine is present on Lys97.

It belongs to the TrpB family. Tetramer of two alpha and two beta chains. Pyridoxal 5'-phosphate is required as a cofactor.

The enzyme catalyses (1S,2R)-1-C-(indol-3-yl)glycerol 3-phosphate + L-serine = D-glyceraldehyde 3-phosphate + L-tryptophan + H2O. Its pathway is amino-acid biosynthesis; L-tryptophan biosynthesis; L-tryptophan from chorismate: step 5/5. Its function is as follows. The beta subunit is responsible for the synthesis of L-tryptophan from indole and L-serine. In Lacticaseibacillus casei (strain BL23) (Lactobacillus casei), this protein is Tryptophan synthase beta chain.